We begin with the raw amino-acid sequence, 230 residues long: Small ribosomal subunit protein uS3 (230 aa).

Residues 39-107 enclose the KH type-2 domain; that stretch reads VRNYLRQKLA…PIHVNIEEIR (69 aa). Residues 210-230 are disordered; that stretch reads SSKPEHESKQRKAGRRNAAAN.

The protein belongs to the universal ribosomal protein uS3 family. As to quaternary structure, part of the 30S ribosomal subunit. Forms a tight complex with proteins S10 and S14.

In terms of biological role, binds the lower part of the 30S subunit head. Binds mRNA in the 70S ribosome, positioning it for translation. This Neisseria gonorrhoeae (strain ATCC 700825 / FA 1090) protein is Small ribosomal subunit protein uS3.